The chain runs to 971 residues: Translation initiation factor IF-2 (971 aa).

A compositionally biased stretch (basic and acidic residues) spans 49-63; that stretch reads HLRKSHGATDGDKRK. Disordered stretches follow at residues 49–86 and 101–385; these read HLRK…ARTI and DVAE…APTE. Over residues 105–114 the composition is skewed to low complexity; the sequence is GAEQGQAQVA. Over residues 121-177 the composition is skewed to basic and acidic residues; sequence ELKRREEEARREAELLEKQAQELRERQERLEREEAERRAREEAAEAQRRRAEEEAAA. Low complexity predominate over residues 178-209; the sequence is KRAAAAAVEAQQVAAQQAAEAQQETAGAQSAQ. Basic and acidic residues predominate over residues 210-261; sequence DEARAAAERAAQREAAKKAEDAAREAADKTRAEQEEIRKRREAAEAEARAIR. Positions 277–286 are enriched in pro residues; that stretch reads PPKPVEPPKP. The segment covering 298–325 has biased composition (low complexity); sequence KPAGASAARPAVKKPAGAAPATTAPAGA. The segment covering 355-368 has biased composition (gly residues); that stretch reads SSGGVDRGWRGGPK. One can recognise a tr-type G domain in the interval 471–640; sequence PRPPVVTVMG…LLQAEVLELK (170 aa). The segment at 480 to 487 is G1; the sequence is GHVDHGKT. Residue 480–487 coordinates GTP; the sequence is GHVDHGKT. The G2 stretch occupies residues 505–509; sequence GITQH. Residues 526–529 are G3; that stretch reads DTPG. GTP is bound by residues 526–530 and 580–583; these read DTPGH and NKID. The G4 stretch occupies residues 580-583; that stretch reads NKID. The segment at 616 to 618 is G5; it reads SAK.

Belongs to the TRAFAC class translation factor GTPase superfamily. Classic translation factor GTPase family. IF-2 subfamily.

The protein resides in the cytoplasm. Its function is as follows. One of the essential components for the initiation of protein synthesis. Protects formylmethionyl-tRNA from spontaneous hydrolysis and promotes its binding to the 30S ribosomal subunits. Also involved in the hydrolysis of GTP during the formation of the 70S ribosomal complex. This is Translation initiation factor IF-2 from Burkholderia ambifaria (strain ATCC BAA-244 / DSM 16087 / CCUG 44356 / LMG 19182 / AMMD) (Burkholderia cepacia (strain AMMD)).